Reading from the N-terminus, the 225-residue chain is Protein-disulfide oxidoreductase DsbI (225 aa).

The helical transmembrane segment at 27–47 threads the bilayer; that stretch reads FLWLLMAIAMGGLIILAHSFF. Residues Cys56 and Cys59 are joined by a disulfide bond. Transmembrane regions (helical) follow at residues 65–85 and 87–107; these read AMFV…NIVL and LIGC…SIKL. An intrachain disulfide couples Cys128 to Cys154. A helical membrane pass occupies residues 199 to 219; that stretch reads CMLAFGLCLILLLVMSGAWAL.

It belongs to the DsbB family. DsbI subfamily. As to quaternary structure, interacts with DsbL.

Its subcellular location is the cell inner membrane. Functionally, required for disulfide bond formation in some proteins. Part of a redox system composed of DsbI and DsbL that mediates formation of an essential disulfide bond in AssT. This Salmonella choleraesuis (strain SC-B67) protein is Protein-disulfide oxidoreductase DsbI.